The following is a 94-amino-acid chain: Small ribosomal subunit protein uS19 (94 aa).

This sequence belongs to the universal ribosomal protein uS19 family.

In terms of biological role, protein S19 forms a complex with S13 that binds strongly to the 16S ribosomal RNA. This is Small ribosomal subunit protein uS19 from Wolbachia pipientis subsp. Culex pipiens (strain wPip).